The primary structure comprises 235 residues: DnaA regulatory inactivator Hda (235 aa).

It belongs to the DnaA family. HdA subfamily. In terms of assembly, the active form seems to be an ADP-bound monomer. Forms the RIDA complex (regulatory inactivation of DnaA) of ATP-DnaA, ADP-Hda and the DNA-loaded beta sliding clamp (dnaN).

In terms of biological role, mediates the interaction of DNA replication initiator protein DnaA with DNA polymerase subunit beta sliding clamp (dnaN). Stimulates hydrolysis of ATP-DnaA to ADP-DnaA, rendering DnaA inactive for reinitiation, a process called regulatory inhibition of DnaA or RIDA. This Yersinia pestis bv. Antiqua (strain Antiqua) protein is DnaA regulatory inactivator Hda.